Reading from the N-terminus, the 96-residue chain is MKTAYDVILAPVLSEKAYAGFAEGKYTFWVHPKATKTEIKNAVETAFKVKVVKVNTLHVRGKKKRLGRYLGKRPDRKKAIVQVAPGQKIEALEGLI.

Belongs to the universal ribosomal protein uL23 family. As to quaternary structure, part of the 50S ribosomal subunit. Contacts protein L29, and trigger factor when it is bound to the ribosome.

Its function is as follows. One of the early assembly proteins it binds 23S rRNA. One of the proteins that surrounds the polypeptide exit tunnel on the outside of the ribosome. Forms the main docking site for trigger factor binding to the ribosome. In Thermus thermophilus (strain ATCC BAA-163 / DSM 7039 / HB27), this protein is Large ribosomal subunit protein uL23.